The sequence spans 358 residues: Fructose-bisphosphate aldolase 7, cytosolic (358 aa).

Ser2 bears the N-acetylserine mark. Arg52 contacts substrate. Residue Cys68 is modified to S-glutathionyl cysteine; transient. Substrate is bound at residue Lys142. The residue at position 173 (Cys173) is an S-glutathionyl cysteine; transient; alternate. The residue at position 173 (Cys173) is an S-nitrosocysteine; transient; alternate. Glu183 functions as the Proton acceptor in the catalytic mechanism. Lys225 acts as the Schiff-base intermediate with dihydroxyacetone-P in catalysis. Residue 266-268 (SGI) participates in substrate binding.

The protein belongs to the class I fructose-bisphosphate aldolase family. In terms of assembly, homotetramer. In terms of processing, S-glutathionylated at Cys-68 and Cys-173. Post-translationally, S-nitrosylated at Cys-173. As to expression, highly expressed in flowers, and at lower levels in rosettes leaves and cauline leaves.

Its subcellular location is the cytoplasm. The protein localises to the cytosol. The enzyme catalyses beta-D-fructose 1,6-bisphosphate = D-glyceraldehyde 3-phosphate + dihydroxyacetone phosphate. The protein operates within carbohydrate degradation; glycolysis; D-glyceraldehyde 3-phosphate and glycerone phosphate from D-glucose: step 4/4. Functionally, plays a key role in glycolysis and gluconeogenesis. This Arabidopsis thaliana (Mouse-ear cress) protein is Fructose-bisphosphate aldolase 7, cytosolic.